The following is a 584-amino-acid chain: Pentatricopeptide repeat-containing protein At2g01510, mitochondrial (584 aa).

The transit peptide at 1–20 directs the protein to the mitochondrion; sequence MLAKQTPLTKQMLSELLRAS. PPR repeat units lie at residues 73–107, 108–142, 143–173, 174–208, 209–243, 244–274, 275–309, 310–344, and 348–378; these read RIFL…GVRP, DEFT…GFGC, LGIV…MQVK, DLVA…AVQF, DSFT…EIDC, NIIV…MKQR, NVVS…GLRP, NYVT…NDKN, and RKEH…MPVE. The segment at 383–458 is type E motif; the sequence is IWGALLGACA…VAAYSSVEFE (76 aa). The segment at 459-489 is type E(+) motif; sequence GKIHFFNRGDKSHPQSKAIYEKLDEILKKIR. The type DYW motif stretch occupies residues 490-584; it reads KMGYVPDTCS…NGVCSCKEFW (95 aa).

Belongs to the PPR family. PCMP-H subfamily.

The protein localises to the mitochondrion. The chain is Pentatricopeptide repeat-containing protein At2g01510, mitochondrial (PCMP-H37) from Arabidopsis thaliana (Mouse-ear cress).